Reading from the N-terminus, the 203-residue chain is Thymidylate kinase (203 aa).

Position 14–21 (14–21 (GGEGIGKS)) interacts with ATP.

The protein belongs to the thymidylate kinase family.

The enzyme catalyses dTMP + ATP = dTDP + ADP. Phosphorylation of dTMP to form dTDP in both de novo and salvage pathways of dTTP synthesis. The protein is Thymidylate kinase of Rickettsia africae (strain ESF-5).